The primary structure comprises 459 residues: Argininosuccinate lyase (459 aa).

This sequence belongs to the lyase 1 family. Argininosuccinate lyase subfamily.

The protein localises to the cytoplasm. It carries out the reaction 2-(N(omega)-L-arginino)succinate = fumarate + L-arginine. It functions in the pathway amino-acid biosynthesis; L-arginine biosynthesis; L-arginine from L-ornithine and carbamoyl phosphate: step 3/3. This is Argininosuccinate lyase from Ruminiclostridium cellulolyticum (strain ATCC 35319 / DSM 5812 / JCM 6584 / H10) (Clostridium cellulolyticum).